We begin with the raw amino-acid sequence, 231 residues long: Isoprenyl transferase (231 aa).

Asp-14 is an active-site residue. Position 14 (Asp-14) interacts with Mg(2+). Residues 15-18, Trp-19, Arg-27, His-31, and 59-61 contribute to the substrate site; these read GNGR and STE. Catalysis depends on Asn-62, which acts as the Proton acceptor. Substrate contacts are provided by residues Trp-63, Arg-65, Arg-176, and 182 to 184; that span reads RIS. Glu-195 contributes to the Mg(2+) binding site.

This sequence belongs to the UPP synthase family. As to quaternary structure, homodimer. The cofactor is Mg(2+).

Its function is as follows. Catalyzes the condensation of isopentenyl diphosphate (IPP) with allylic pyrophosphates generating different type of terpenoids. This Aquifex pyrophilus protein is Isoprenyl transferase.